The primary structure comprises 83 residues: U20-theraphotoxin-Cg1a 2 (83 aa).

An N-terminal signal peptide occupies residues 1 to 21 (MQVSVLITLAVLGVMFVWTSA). The propeptide occupies 22 to 47 (AELEERGSDQPAWLKSLERIFQSEER). 3 cysteine pairs are disulfide-bonded: C49–C63, C56–C68, and C62–C76.

It belongs to the neurotoxin 10 (Hwtx-1) family. 40 (Jztx-35) subfamily. Expressed by the venom gland.

It localises to the secreted. Probable ion channel inhibitor. The sequence is that of U20-theraphotoxin-Cg1a 2 from Chilobrachys guangxiensis (Chinese earth tiger tarantula).